Reading from the N-terminus, the 704-residue chain is Ion-translocating oxidoreductase complex subunit C (704 aa).

4Fe-4S ferredoxin-type domains are found at residues 368-397 and 407-436; these read MGAP…QQLY and KATA…VQYF. [4Fe-4S] cluster contacts are provided by C377, C380, C383, C387, C416, C419, C422, and C426. Positions 535–684 are disordered; the sequence is ARAKQAAHPM…PADPRKAAVA (150 aa). Residues 556–565 are compositionally biased toward low complexity; sequence KAAVEAAIAR.

The protein belongs to the 4Fe4S bacterial-type ferredoxin family. RnfC subfamily. The complex is composed of six subunits: RsxA, RsxB, RsxC, RsxD, RsxE and RsxG. Requires [4Fe-4S] cluster as cofactor.

It is found in the cell inner membrane. In terms of biological role, part of a membrane-bound complex that couples electron transfer with translocation of ions across the membrane. Required to maintain the reduced state of SoxR. This chain is Ion-translocating oxidoreductase complex subunit C, found in Salmonella paratyphi C (strain RKS4594).